The following is a 310-amino-acid chain: Olfactory receptor 5AR1 (310 aa).

Topologically, residues M1–F28 are extracellular. N-linked (GlcNAc...) asparagine glycosylation is present at N5. A helical transmembrane segment spans residues V29–I49. The Cytoplasmic portion of the chain corresponds to T50–P58. A helical transmembrane segment spans residues M59–P79. Over R80–Q100 the chain is Extracellular. C97 and C189 form a disulfide bridge. A helical membrane pass occupies residues F101–Y120. Over G121 to Q139 the chain is Cytoplasmic. A helical transmembrane segment spans residues V140–T160. Topologically, residues T161–F205 are extracellular. A helical membrane pass occupies residues I206–I226. The Cytoplasmic segment spans residues R227 to S239. Residues T240–L260 traverse the membrane as a helical segment. The Extracellular segment spans residues R261–D271. The chain crosses the membrane as a helical span at residues K272–L292. Over R293–Q310 the chain is Cytoplasmic.

It belongs to the G-protein coupled receptor 1 family.

It is found in the cell membrane. Its function is as follows. Odorant receptor. This chain is Olfactory receptor 5AR1, found in Homo sapiens (Human).